We begin with the raw amino-acid sequence, 79 residues long: Sec-independent protein translocase protein TatA (79 aa).

A helical transmembrane segment spans residues 1–21 (MGGLQPWHWVIVIAVFVLLFG). Positions 43–52 (IKEMQSEGKS) are enriched in basic and acidic residues. The disordered stretch occupies residues 43-79 (IKEMQSEGKSDNPPATPITSERVDTNPTAEQPDKRSA).

It belongs to the TatA/E family. The Tat system comprises two distinct complexes: a TatABC complex, containing multiple copies of TatA, TatB and TatC subunits, and a separate TatA complex, containing only TatA subunits. Substrates initially bind to the TatABC complex, which probably triggers association of the separate TatA complex to form the active translocon.

The protein localises to the cell membrane. Its function is as follows. Part of the twin-arginine translocation (Tat) system that transports large folded proteins containing a characteristic twin-arginine motif in their signal peptide across membranes. TatA could form the protein-conducting channel of the Tat system. The polypeptide is Sec-independent protein translocase protein TatA (Mycobacterium sp. (strain JLS)).